Reading from the N-terminus, the 395-residue chain is RNA demethylase ALKBH5 (395 aa).

2 disordered regions span residues 1 to 28 (MAAA…AGSR) and 47 to 83 (AAEP…EEEA). An N-acetylalanine modification is found at alanine 2. Lysine 58 is covalently cross-linked (Glycyl lysine isopeptide (Lys-Gly) (interchain with G-Cter in ubiquitin)). Positions 60–83 (KYQEDSDPERSDYEEHQLQKEEEA) are enriched in basic and acidic residues. Residues serine 65 and serine 70 each carry the phosphoserine modification. Residues 68 to 117 (ERSDYEEHQLQKEEEARKVKSGIRQIRLFSQDECSKIEARIDEVVSRAEK) are a coiled coil. Tyrosine 72 carries the phosphotyrosine modification. A Glycyl lysine isopeptide (Lys-Gly) (interchain with G-Cter in SUMO1) cross-link involves residue lysine 87. Serine 88 carries the post-translational modification Phosphoserine. An N6-acetyllysine modification is found at lysine 133. The active site involves tyrosine 140. The 2-oxoglutarate site is built by asparagine 194, tyrosine 196, and histidine 205. The cysteines at positions 231 and 268 are disulfide-linked. An N6-acetyllysine modification is found at lysine 236. The 2-oxoglutarate site is built by histidine 267 and arginine 278. Positions 294 to 395 (ETKSLSSSTL…PTRKVKMRRH (102 aa)) are disordered. Low complexity predominate over residues 296–306 (KSLSSSTLPPS). A Glycyl lysine isopeptide (Lys-Gly) (interchain with G-Cter in SUMO1) cross-link involves residue lysine 322. At serine 326 the chain carries Phosphoserine. A Glycyl lysine isopeptide (Lys-Gly) (interchain with G-Cter in SUMO2) cross-link involves residue lysine 329. The segment covering 329–350 (KADPDAAHRPRILEMDKEENRR) has biased composition (basic and acidic residues). An Omega-N-methylarginine modification is found at arginine 360. Phosphoserine is present on residues serine 362, serine 372, serine 375, and serine 385.

It belongs to the alkB family. As to quaternary structure, monomer. Interacts with RBM33; promoting desumoylation by SENP1 and recruitment to N(6)-methyladenosine-containing mRNAs. Interacts (when acetylated by KAT8) with PSPC1; interaction facilitates recognition of N(6)-methyladenosine (m6A) mRNA. Fe(2+) is required as a cofactor. Phosphorylated at Ser-88 and Ser-326 in response to reactive oxygen species (ROS), promoting sumoylation and inactivation. Post-translationally, acetylated by KAT8 at Lys-236, promoting interaction with PSPC1, thereby facilitating recognition of N(6)-methyladenosine (m6A) mRNA by ALKBH5. Deacetylated at Lys-236 by HDAC7. In terms of processing, sumoylated at Lys-87 and Lys-322 by PIAS4 following phosphorylation at Ser-88 and Ser-326 in response to reactive oxygen species (ROS), inhibiting the RNA demethylase activity. Desumoylated by SENP1; relieving RNA demethylase inhibition, leading to N(6)-methyladenosine-containing mRNAs demethylation. Ubiquitinated at Lys-58 via 'Lys-48'-linked polyubiquitin chain, leading to its degradation by the proteasome. Deubiquitinated at Lys-58 by USP9X, promoting its stabilizazion. As to expression, widely expressed, with highest expression in testis. In testis, present in almost all testicular cell types except elongating and elongated spermatids (at protein level). Among spermatogenic cells, present at high level in spermatocytes; medium levels in spermatogonia and lower levels in round spermatids (at protein level).

It localises to the nucleus speckle. The catalysed reaction is an N(6)-methyladenosine in mRNA + 2-oxoglutarate + O2 = an adenosine in mRNA + formaldehyde + succinate + CO2. Its activity is regulated as follows. RNA demethylase activity is inhibited following sumoylation. Inhibition is relieved following desumoylation. Inhibited by histone demethylase inhibitor IOX1. In terms of biological role, dioxygenase that specifically demethylates N(6)-methyladenosine (m6A) RNA, the most prevalent internal modification of messenger RNA (mRNA) in higher eukaryotes. Demethylates RNA by oxidative demethylation, which requires molecular oxygen, alpha-ketoglutarate and iron. Demethylation of m6A mRNA affects mRNA processing, translation and export. Can also demethylate N(6)-methyladenosine in single-stranded DNA (in vitro). Required for the late meiotic and haploid phases of spermatogenesis by mediating m6A demethylation in spermatocytes and round spermatids: m6A demethylation of target transcripts is required for correct splicing and the production of longer 3'-UTR mRNAs in male germ cells. Involved in paraspeckle assembly, a nuclear membraneless organelle, by undergoing liquid-liquid phase separation. Paraspeckle assembly is coupled with m6A demethylation of RNAs, such as NEAT1 non-coding RNA. Also acts as a negative regulator of T-cell development: inhibits gamma-delta T-cell proliferation via demethylation of JAG1 and NOTCH2 transcripts. Inhibits regulatory T-cell (Treg) recruitment by mediating demethylation and destabilization of CCL28 mRNAs. The sequence is that of RNA demethylase ALKBH5 from Mus musculus (Mouse).